The primary structure comprises 1004 residues: Sodium/potassium-transporting ATPase subunit alpha-B (1004 aa).

2 helical membrane passes run 76–96 and 110–126; these read LFGG…LAYG and NLYL…VTGI. Residues 197-216 are disordered; it reads SSLTGESEPQARSPEFTNDN. 2 consecutive transmembrane segments (helical) span residues 272–294 and 301–329; these read FIHI…AFVL and AVVF…TLTA. Asp-357 (4-aspartylphosphate intermediate) is an active-site residue. Residue Lys-489 coordinates ATP. Mg(2+)-binding residues include Asp-698 and Asp-702. The next 4 helical transmembrane spans lie at 768–791, 828–855, 897–918, and 934–959; these read ISPF…ILCI, ERLI…VIMA, SSCH…LIIS, and ILNF…DKGL.

The protein belongs to the cation transport ATPase (P-type) (TC 3.A.3) family. Type IIC subfamily. As to quaternary structure, the sodium/potassium-transporting ATPase is composed of a catalytic alpha subunit, an auxiliary non-catalytic beta subunit and an additional regulatory subunit.

It is found in the cell membrane. It catalyses the reaction K(+)(out) + Na(+)(in) + ATP + H2O = K(+)(in) + Na(+)(out) + ADP + phosphate + H(+). Its function is as follows. This is the catalytic component of the active enzyme, which catalyzes the hydrolysis of ATP coupled with the exchange of sodium and potassium ions across the plasma membrane. This action creates the electrochemical gradient of sodium and potassium ions, providing the energy for active transport of various nutrients. This chain is Sodium/potassium-transporting ATPase subunit alpha-B, found in Artemia franciscana (Brine shrimp).